The sequence spans 448 residues: Histidine--tRNA ligase (448 aa).

2 disordered regions span residues 1-20 (MAIK…SPKL) and 428-448 (AGQA…QEKA).

The protein belongs to the class-II aminoacyl-tRNA synthetase family. Homodimer.

The protein localises to the cytoplasm. It catalyses the reaction tRNA(His) + L-histidine + ATP = L-histidyl-tRNA(His) + AMP + diphosphate + H(+). This chain is Histidine--tRNA ligase, found in Deinococcus deserti (strain DSM 17065 / CIP 109153 / LMG 22923 / VCD115).